The primary structure comprises 325 residues: MAVSDRKLQLLDFEKPLAELEDRIEQIRSLSEQNGVDVTDQIAQLEGRAEQLRQEIFSSLTPMQELQLARHPRRPSTLDYIHAISDEWMELHGDRRGYDDPAIVGGVGRIGGQPVLMLGHQKGRDTKDNVARNFGMPFPSGYRKAMRLMDHADRFGLPIISFIDTPAAWAGLEAEQFGQGEAIALNLREMFRLDVPIICTVIGEGGSGGALGIGVGDRLLMFEHSIYSVAPPEACAAILWRDAQEGPQAAEALKITATDLQELGIIDQILPEPPGGAHVNPIKAANIIKTAILSNLEELWRLSPQERRQQRYHKFRNMGIFSQLP.

In terms of domain architecture, CoA carboxyltransferase C-terminal spans 44–298 (QLEGRAEQLR…KTAILSNLEE (255 aa)).

It belongs to the AccA family. As to quaternary structure, acetyl-CoA carboxylase is a heterohexamer composed of biotin carboxyl carrier protein (AccB), biotin carboxylase (AccC) and two subunits each of ACCase subunit alpha (AccA) and ACCase subunit beta (AccD).

The protein resides in the cytoplasm. The catalysed reaction is N(6)-carboxybiotinyl-L-lysyl-[protein] + acetyl-CoA = N(6)-biotinyl-L-lysyl-[protein] + malonyl-CoA. It participates in lipid metabolism; malonyl-CoA biosynthesis; malonyl-CoA from acetyl-CoA: step 1/1. Component of the acetyl coenzyme A carboxylase (ACC) complex. First, biotin carboxylase catalyzes the carboxylation of biotin on its carrier protein (BCCP) and then the CO(2) group is transferred by the carboxyltransferase to acetyl-CoA to form malonyl-CoA. This chain is Acetyl-coenzyme A carboxylase carboxyl transferase subunit alpha, found in Acaryochloris marina (strain MBIC 11017).